The sequence spans 122 residues: Basic phospholipase A2 homolog ecarpholin S (122 aa).

Disulfide bonds link Cys-26-Cys-115, Cys-28-Cys-44, Cys-43-Cys-95, Cys-49-Cys-122, Cys-50-Cys-88, Cys-57-Cys-81, and Cys-75-Cys-86. Residues 105-117 (KKYTYYPNFWCKG) form an important for membrane-damaging activities in eukaryotes and bacteria; heparin-binding region.

In terms of tissue distribution, expressed by the venom gland.

Its subcellular location is the secreted. With respect to regulation, suramin inhibits the myotoxic activity. In terms of biological role, snake venom phospholipase A2 homolog that lacks enzymatic activity. Shows high myotoxin activities and displays edema-inducing activities. The chain is Basic phospholipase A2 homolog ecarpholin S from Echis carinatus (Saw-scaled viper).